Here is a 429-residue protein sequence, read N- to C-terminus: GTPase Obg (429 aa).

The region spanning 1-158 (MFVDHVKIYV…LNVILELKVL (158 aa)) is the Obg domain. Residues 119–143 (AGRGGRGNSRFATPANPAPELSEKG) are disordered. The OBG-type G domain maps to 159–329 (ADVGLVGFPS…LLFAIADLLE (171 aa)). GTP contacts are provided by residues 165-172 (GFPSVGKS), 190-194 (FTTIV), 212-215 (DLPG), 282-285 (NKMD), and 310-312 (SAV). Mg(2+) is bound by residues Ser-172 and Thr-192. The 79-residue stretch at 351 to 429 (KHEAKGEDFE…LQEFEFEFVD (79 aa)) folds into the OCT domain.

It belongs to the TRAFAC class OBG-HflX-like GTPase superfamily. OBG GTPase family. As to quaternary structure, monomer. Requires Mg(2+) as cofactor.

The protein resides in the cytoplasm. Its function is as follows. An essential GTPase which binds GTP, GDP and possibly (p)ppGpp with moderate affinity, with high nucleotide exchange rates and a fairly low GTP hydrolysis rate. Plays a role in control of the cell cycle, stress response, ribosome biogenesis and in those bacteria that undergo differentiation, in morphogenesis control. In Lysinibacillus sphaericus (strain C3-41), this protein is GTPase Obg.